The primary structure comprises 228 residues: Uracil-DNA glycosylase (228 aa).

Asp-64 serves as the catalytic Proton acceptor.

This sequence belongs to the uracil-DNA glycosylase (UDG) superfamily. UNG family. In terms of assembly, monomer.

It is found in the cytoplasm. The enzyme catalyses Hydrolyzes single-stranded DNA or mismatched double-stranded DNA and polynucleotides, releasing free uracil.. Its function is as follows. Excises uracil residues from the DNA which can arise as a result of misincorporation of dUMP residues by DNA polymerase or due to deamination of cytosine. This chain is Uracil-DNA glycosylase, found in Escherichia coli O6:H1 (strain CFT073 / ATCC 700928 / UPEC).